A 248-amino-acid polypeptide reads, in one-letter code: 1-(5-phosphoribosyl)-5-[(5-phosphoribosylamino)methylideneamino] imidazole-4-carboxamide isomerase (248 aa).

The active-site Proton acceptor is the aspartate 8. Aspartate 129 (proton donor) is an active-site residue.

This sequence belongs to the HisA/HisF family.

The protein localises to the cytoplasm. It carries out the reaction 1-(5-phospho-beta-D-ribosyl)-5-[(5-phospho-beta-D-ribosylamino)methylideneamino]imidazole-4-carboxamide = 5-[(5-phospho-1-deoxy-D-ribulos-1-ylimino)methylamino]-1-(5-phospho-beta-D-ribosyl)imidazole-4-carboxamide. The protein operates within amino-acid biosynthesis; L-histidine biosynthesis; L-histidine from 5-phospho-alpha-D-ribose 1-diphosphate: step 4/9. This chain is 1-(5-phosphoribosyl)-5-[(5-phosphoribosylamino)methylideneamino] imidazole-4-carboxamide isomerase, found in Sinorhizobium medicae (strain WSM419) (Ensifer medicae).